Reading from the N-terminus, the 524-residue chain is Peptide chain release factor 3 (524 aa).

The tr-type G domain occupies S9 to I275. Residues S18–T25, D86–H90, and N140–D143 each bind GTP.

It belongs to the TRAFAC class translation factor GTPase superfamily. Classic translation factor GTPase family. PrfC subfamily.

It is found in the cytoplasm. In terms of biological role, increases the formation of ribosomal termination complexes and stimulates activities of RF-1 and RF-2. It binds guanine nucleotides and has strong preference for UGA stop codons. It may interact directly with the ribosome. The stimulation of RF-1 and RF-2 is significantly reduced by GTP and GDP, but not by GMP. In Dechloromonas aromatica (strain RCB), this protein is Peptide chain release factor 3.